A 174-amino-acid chain; its full sequence is MAVTAFNTLKLVSSSLDPIPSVSCSSYSFSLIYVGSPYKRCLKQSCSVRAMTSSSSAASSSSSSFGSRMEESIRKTVTENTVVIYSKTWCSYCTEVKTLFKRLGVQPLVVELDQLGPQGPQLQKVLERLTGQHTVPNVFVCGKHIGGCTDTVKLNRKGDLELMLAEANGKNGQS.

A chloroplast-targeting transit peptide spans 1–51; the sequence is MAVTAFNTLKLVSSSLDPIPSVSCSSYSFSLIYVGSPYKRCLKQSCSVRAM. Thr-52 is subject to N-acetylthreonine. Cys-90 bears the S-glutathionyl cysteine; partial mark. A disulfide bond links Cys-90 and Cys-93. Residues 93-171 enclose the Glutaredoxin domain; that stretch reads CTEVKTLFKR…LMLAEANGKN (79 aa). Residues Val-135, Cys-148, and Thr-149 each coordinate glutathione. The residue at position 148 (Cys-148) is an S-glutathionyl cysteine; partial.

This sequence belongs to the glutaredoxin family. CPYC subfamily. As to quaternary structure, monomeric apoprotein and homodimeric holoprotein containing a [2Fe-2S] cluster. No in vitro interactions with SUFE1, BOLA1, BOLA2 or BOLA4. In terms of processing, glutathionylated.

The protein localises to the plastid. It localises to the chloroplast. Its function is as follows. Has a glutathione-disulfide oxidoreductase activity in the presence of NADPH and glutathione reductase. Reduces low molecular weight disulfides and proteins. Can assemble a [2Fe-2S] cluster, but cannot transfer it to an apoferredoxin. The sequence is that of Glutaredoxin-C5, chloroplastic from Arabidopsis thaliana (Mouse-ear cress).